The chain runs to 549 residues: Glucose-6-phosphate isomerase (549 aa).

The active-site Proton donor is glutamate 355. Active-site residues include histidine 386 and lysine 514.

It belongs to the GPI family.

Its subcellular location is the cytoplasm. It catalyses the reaction alpha-D-glucose 6-phosphate = beta-D-fructose 6-phosphate. The protein operates within carbohydrate biosynthesis; gluconeogenesis. Its pathway is carbohydrate degradation; glycolysis; D-glyceraldehyde 3-phosphate and glycerone phosphate from D-glucose: step 2/4. Catalyzes the reversible isomerization of glucose-6-phosphate to fructose-6-phosphate. This chain is Glucose-6-phosphate isomerase, found in Salmonella typhi.